Reading from the N-terminus, the 209-residue chain is Probable glutathione peroxidase 8 (209 aa).

N-acetylmethionine is present on Met1. A helical membrane pass occupies residues 18–40 (VFAVLLSIVLCTVTLFLLQLKFL). The active site involves Cys79.

It belongs to the glutathione peroxidase family.

It is found in the membrane. The catalysed reaction is 2 glutathione + H2O2 = glutathione disulfide + 2 H2O. The protein is Probable glutathione peroxidase 8 (GPX8) of Homo sapiens (Human).